The chain runs to 292 residues: 4-hydroxy-tetrahydrodipicolinate synthase (292 aa).

Thr-45 contributes to the pyruvate binding site. Tyr-134 functions as the Proton donor/acceptor in the catalytic mechanism. Lys-162 acts as the Schiff-base intermediate with substrate in catalysis. Val-204 provides a ligand contact to pyruvate.

It belongs to the DapA family. In terms of assembly, homotetramer; dimer of dimers.

Its subcellular location is the cytoplasm. It carries out the reaction L-aspartate 4-semialdehyde + pyruvate = (2S,4S)-4-hydroxy-2,3,4,5-tetrahydrodipicolinate + H2O + H(+). It functions in the pathway amino-acid biosynthesis; L-lysine biosynthesis via DAP pathway; (S)-tetrahydrodipicolinate from L-aspartate: step 3/4. Catalyzes the condensation of (S)-aspartate-beta-semialdehyde [(S)-ASA] and pyruvate to 4-hydroxy-tetrahydrodipicolinate (HTPA). The protein is 4-hydroxy-tetrahydrodipicolinate synthase of Marinobacter nauticus (strain ATCC 700491 / DSM 11845 / VT8) (Marinobacter aquaeolei).